A 536-amino-acid polypeptide reads, in one-letter code: Inactive beta-amylase 9 (536 aa).

The residue at position 47 (serine 47) is a Phosphoserine. The disordered stretch occupies residues 511-536 (QASEAEVEAETASIGSGTGAPSLQTA).

It belongs to the glycosyl hydrolase 14 family. As to expression, mostly expressed in young floral buds, flowers and roots, and, to a later extent, in stems and leaves.

It localises to the cytoplasm. The polypeptide is Inactive beta-amylase 9 (BAM9) (Arabidopsis thaliana (Mouse-ear cress)).